Here is a 328-residue protein sequence, read N- to C-terminus: Phenylalanine--tRNA ligase alpha subunit (328 aa).

Glutamate 245 lines the Mg(2+) pocket.

This sequence belongs to the class-II aminoacyl-tRNA synthetase family. Phe-tRNA synthetase alpha subunit type 1 subfamily. Tetramer of two alpha and two beta subunits. Mg(2+) serves as cofactor.

The protein resides in the cytoplasm. It carries out the reaction tRNA(Phe) + L-phenylalanine + ATP = L-phenylalanyl-tRNA(Phe) + AMP + diphosphate + H(+). This is Phenylalanine--tRNA ligase alpha subunit from Helicobacter pylori (strain HPAG1).